The sequence spans 718 residues: SANT and BTB domain regulator of class switch recombination (718 aa).

One can recognise an SANT domain in the interval 21 to 59 (DMILYPLIGIPQTINWETIARLVPGLTPKECAKRFDELK). The span at 118–134 (ASTRNCSSESENCTTHN) shows a compositional bias: polar residues. The interval 118–142 (ASTRNCSSESENCTTHNGGEMTEES) is disordered. The BTB domain maps to 147 to 255 (MVIHVCDEAK…QCIQYCHKNM (109 aa)). Residues 555–576 (SEEEEYTTGSEVTEDEVGDEEE) are compositionally biased toward acidic residues. Disordered regions lie at residues 555 to 622 (SEEE…SPFV) and 692 to 718 (SVPVSARQSSSEKNTRSKSRFGQGRPA). The segment covering 580–595 (KQRKKEKPKKFTRQPK) has biased composition (basic residues). The span at 604-615 (QRKEKALEKSAS) shows a compositional bias: basic and acidic residues.

It belongs to the KIAA1841 family. As to quaternary structure, homodimer. Interacts (via the BTB domain) with HDAC1 and NCOR2.

Negatively regulates class switch recombination or isotype switching in splenic B-cells. In Homo sapiens (Human), this protein is SANT and BTB domain regulator of class switch recombination.